Consider the following 232-residue polypeptide: Leucyl/phenylalanyl-tRNA--protein transferase (232 aa).

This sequence belongs to the L/F-transferase family.

Its subcellular location is the cytoplasm. It catalyses the reaction N-terminal L-lysyl-[protein] + L-leucyl-tRNA(Leu) = N-terminal L-leucyl-L-lysyl-[protein] + tRNA(Leu) + H(+). It carries out the reaction N-terminal L-arginyl-[protein] + L-leucyl-tRNA(Leu) = N-terminal L-leucyl-L-arginyl-[protein] + tRNA(Leu) + H(+). The enzyme catalyses L-phenylalanyl-tRNA(Phe) + an N-terminal L-alpha-aminoacyl-[protein] = an N-terminal L-phenylalanyl-L-alpha-aminoacyl-[protein] + tRNA(Phe). Functions in the N-end rule pathway of protein degradation where it conjugates Leu, Phe and, less efficiently, Met from aminoacyl-tRNAs to the N-termini of proteins containing an N-terminal arginine or lysine. The chain is Leucyl/phenylalanyl-tRNA--protein transferase from Nitrosospira multiformis (strain ATCC 25196 / NCIMB 11849 / C 71).